Consider the following 140-residue polypeptide: Probable deoxyuridine 5'-triphosphate nucleotidohydrolase (140 aa).

Residues 62–64, 76–79, Arg130, and 135–136 contribute to the substrate site; these read RSG, GVID, and FG.

This sequence belongs to the dUTPase family. As to quaternary structure, homotrimer. It depends on Mg(2+) as a cofactor.

It carries out the reaction dUTP + H2O = dUMP + diphosphate + H(+). Its pathway is pyrimidine metabolism; dUMP biosynthesis; dUMP from dCTP (dUTP route): step 2/2. Its function is as follows. This enzyme is involved in nucleotide metabolism: it produces dUMP, the immediate precursor of thymidine nucleotides and it decreases the intracellular concentration of dUTP so that uracil cannot be incorporated into DNA. This Schizosaccharomyces pombe (strain 972 / ATCC 24843) (Fission yeast) protein is Probable deoxyuridine 5'-triphosphate nucleotidohydrolase.